Reading from the N-terminus, the 3122-residue chain is Laminin subunit alpha-2 (3122 aa).

An N-terminal signal peptide occupies residues 1 to 22 (MPGAAGVLLLLLLSGGLGGVQA). Positions 35 to 286 (QQRGLFPAVL…SVKDISVGGM (252 aa)) constitute a Laminin N-terminal domain. Residues Asn-55 and Asn-89 are each glycosylated (N-linked (GlcNAc...) asparagine). Cystine bridges form between Cys-287–Cys-296, Cys-289–Cys-307, Cys-309–Cys-318, Cys-321–Cys-341, Cys-344–Cys-353, and Cys-346–Cys-378. Laminin EGF-like domains follow at residues 287-343 (CICY…ECEA), 344-413 (CNCH…PCQP), 414-468 (CHCD…DCKA), and 469-517 (CNCS…GCDE). Residue Asn-303 is glycosylated (N-linked (GlcNAc...) asparagine). Residues Asn-363 and Asn-380 are each glycosylated (N-linked (GlcNAc...) asparagine). Intrachain disulfides connect Cys-381–Cys-390, Cys-393–Cys-411, Cys-414–Cys-426, Cys-416–Cys-442, Cys-444–Cys-453, Cys-456–Cys-466, Cys-469–Cys-482, Cys-471–Cys-486, Cys-488–Cys-497, and Cys-500–Cys-515. Asn-470 carries N-linked (GlcNAc...) asparagine glycosylation. One can recognise a Laminin EGF-like 5; first part domain in the interval 518 to 527 (CFCSGVSNRC). One can recognise a Laminin IV type A 1 domain in the interval 531 to 723 (YWTYGKIQDM…DGSIAAAVEV (193 aa)). Residues 724–756 (CQCPPGYTGSSCESCWPRHRRVNGTIFGGICEP) form the Laminin EGF-like 5; second part domain. An N-linked (GlcNAc...) asparagine glycan is attached at Asn-746. Intrachain disulfides connect Cys-757/Cys-766, Cys-759/Cys-773, Cys-776/Cys-785, Cys-788/Cys-804, Cys-807/Cys-822, Cys-809/Cys-832, Cys-835/Cys-844, Cys-847/Cys-862, Cys-865/Cys-879, Cys-867/Cys-886, Cys-889/Cys-898, Cys-901/Cys-915, Cys-918/Cys-930, Cys-920/Cys-937, Cys-939/Cys-948, Cys-951/Cys-964, Cys-967/Cys-979, Cys-969/Cys-985, Cys-987/Cys-996, Cys-999/Cys-1011, Cys-1014/Cys-1023, Cys-1016/Cys-1030, Cys-1032/Cys-1041, Cys-1044/Cys-1057, Cys-1060/Cys-1072, Cys-1062/Cys-1079, Cys-1081/Cys-1090, Cys-1093/Cys-1103, Cys-1106/Cys-1118, Cys-1108/Cys-1134, Cys-1136/Cys-1145, and Cys-1148/Cys-1163. 8 Laminin EGF-like domains span residues 757-806 (CQCF…DCQP), 807-864 (CACP…SCQP), 865-917 (CQCN…NCQP), 918-966 (CRCN…GCVP), 967-1013 (CNCN…GCTA), 1014-1059 (CECS…GCKA), 1060-1105 (CNCS…RCNL), and 1106-1165 (CDCF…GCSS). A glycan (N-linked (GlcNAc...) asparagine) is linked at Asn-1061. The region spanning 1166 to 1175 (CYCFGTTTQC) is the Laminin EGF-like 14; first part domain. Residues 1176 to 1379 (SEAKGLIRTW…MTPPADLIEK (204 aa)) form the Laminin IV type A 2 domain. In terms of domain architecture, Laminin EGF-like 14; second part spans 1380–1419 (CDCPLGYSGLSCEACLPGFYRLRSQPGGRTPGPTLGTCVP). Cystine bridges form between Cys-1420/Cys-1429, Cys-1422/Cys-1436, Cys-1439/Cys-1448, Cys-1451/Cys-1466, Cys-1469/Cys-1484, Cys-1471/Cys-1494, Cys-1497/Cys-1506, Cys-1509/Cys-1524, Cys-1527/Cys-1539, Cys-1529/Cys-1546, Cys-1548/Cys-1557, and Cys-1560/Cys-1571. 3 Laminin EGF-like domains span residues 1420–1468 (CQCN…DCQQ), 1469–1526 (CACP…SCQE), and 1527–1573 (CECD…ECVF). Residues 1574 to 2144 (CGDECTGLLL…NQARKQANSI (571 aa)) are domain II and I. 12 N-linked (GlcNAc...) asparagine glycosylation sites follow: Asn-1597, Asn-1614, Asn-1700, Asn-1810, Asn-1901, Asn-1916, Asn-1920, Asn-2017, Asn-2028, Asn-2045, Asn-2126, and Asn-2240. Residues 1630–2150 (ERLIQLAEGN…ANSIKVSVSS (521 aa)) are a coiled coil. 5 consecutive Laminin G-like domains span residues 2145–2328 (KVSV…CKGC), 2340–2521 (TIQF…TKGC), 2526–2710 (VYTV…IGRC), 2763–2934 (SKQF…VGTC), and 2939–3110 (QRGT…KALE). A disulfide bridge links Cys-2302 with Cys-2328. Residues Asn-2360, Asn-2435, and Asn-2478 are each glycosylated (N-linked (GlcNAc...) asparagine). The cysteines at positions 2495 and 2521 are disulfide-linked. 3 N-linked (GlcNAc...) asparagine glycosylation sites follow: Asn-2551, Asn-2558, and Asn-2648. A disulfide bridge connects residues Cys-2683 and Cys-2710. 2 N-linked (GlcNAc...) asparagine glycosylation sites follow: Asn-2868 and Asn-2893. Cys-2909 and Cys-2934 form a disulfide bridge. Polar residues predominate over residues 3043 to 3060 (GNQVEAQSPNPASTSADT). The disordered stretch occupies residues 3043–3063 (GNQVEAQSPNPASTSADTNDP).

Laminin is a complex glycoprotein, consisting of three different polypeptide chains (alpha, beta, gamma), which are bound to each other by disulfide bonds into a cross-shaped molecule comprising one long and three short arms with globules at each end. Alpha-2 is a subunit of laminin-2 (laminin-211 or merosin), laminin-4 (laminin-221 or S-merosin) and laminin-12 (laminin-213). Interacts with FBLN1, FBLN2 and NID2. In terms of tissue distribution, placenta, striated muscle, peripheral nerve, cardiac muscle, pancreas, lung, spleen, kidney, adrenal gland, skin, testis, meninges, choroid plexus, and some other regions of the brain; not in liver, thymus and bone.

The protein localises to the secreted. The protein resides in the extracellular space. Its subcellular location is the extracellular matrix. It is found in the basement membrane. In terms of biological role, binding to cells via a high affinity receptor, laminin is thought to mediate the attachment, migration and organization of cells into tissues during embryonic development by interacting with other extracellular matrix components. In Homo sapiens (Human), this protein is Laminin subunit alpha-2 (LAMA2).